The primary structure comprises 90 residues: uncharacterized protein (90 aa).

The chain crosses the membrane as a helical span at residues 15-34 (HVLAISTFIATAAVASYFTT). The interval 34-65 (TKPKTKNEGKNSSALSQQKSGESSNSDAMGKD) is disordered. Residues 43–60 (KNSSALSQQKSGESSNSD) show a composition bias toward polar residues. Asparagine 44 carries N-linked (GlcNAc...) asparagine glycosylation.

Its subcellular location is the mitochondrion membrane. This is an uncharacterized protein from Saccharomyces cerevisiae (strain ATCC 204508 / S288c) (Baker's yeast).